A 236-amino-acid chain; its full sequence is Small ribosomal subunit protein uS2c (236 aa).

Belongs to the universal ribosomal protein uS2 family.

It localises to the plastid. The protein resides in the chloroplast. The chain is Small ribosomal subunit protein uS2c (rps2) from Carica papaya (Papaya).